A 327-amino-acid polypeptide reads, in one-letter code: Biotin synthase (327 aa).

Residues 49–282 (FNKDKIDLCS…NKVIRLCGGR (234 aa)) form the Radical SAM core domain. 3 residues coordinate [4Fe-4S] cluster: Cys67, Cys71, and Cys74. The [2Fe-2S] cluster site is built by Ser110, Cys142, Cys201, and Arg277.

The protein belongs to the radical SAM superfamily. Biotin synthase family. As to quaternary structure, homodimer. Requires [4Fe-4S] cluster as cofactor. It depends on [2Fe-2S] cluster as a cofactor.

It carries out the reaction (4R,5S)-dethiobiotin + (sulfur carrier)-SH + 2 reduced [2Fe-2S]-[ferredoxin] + 2 S-adenosyl-L-methionine = (sulfur carrier)-H + biotin + 2 5'-deoxyadenosine + 2 L-methionine + 2 oxidized [2Fe-2S]-[ferredoxin]. It participates in cofactor biosynthesis; biotin biosynthesis; biotin from 7,8-diaminononanoate: step 2/2. Catalyzes the conversion of dethiobiotin (DTB) to biotin by the insertion of a sulfur atom into dethiobiotin via a radical-based mechanism. The chain is Biotin synthase from Methanococcus maripaludis (strain C5 / ATCC BAA-1333).